Consider the following 304-residue polypeptide: Acetyl-coenzyme A carboxylase carboxyl transferase subunit beta (304 aa).

Positions 23-292 constitute a CoA carboxyltransferase N-terminal domain; sequence VWTKCDSCGQ…PNPDAPREGE (270 aa). 4 residues coordinate Zn(2+): C27, C30, C46, and C49. A C4-type zinc finger spans residues 27-49; the sequence is CDSCGQVLYRAELERNLEVCPKC. A disordered region spans residues 281-304; that stretch reads PAPNPDAPREGEVVPPVPDQEPEA. Pro residues predominate over residues 295-304; that stretch reads PPVPDQEPEA.

Belongs to the AccD/PCCB family. Acetyl-CoA carboxylase is a heterohexamer composed of biotin carboxyl carrier protein (AccB), biotin carboxylase (AccC) and two subunits each of ACCase subunit alpha (AccA) and ACCase subunit beta (AccD). Requires Zn(2+) as cofactor.

The protein resides in the cytoplasm. It carries out the reaction N(6)-carboxybiotinyl-L-lysyl-[protein] + acetyl-CoA = N(6)-biotinyl-L-lysyl-[protein] + malonyl-CoA. It participates in lipid metabolism; malonyl-CoA biosynthesis; malonyl-CoA from acetyl-CoA: step 1/1. Component of the acetyl coenzyme A carboxylase (ACC) complex. Biotin carboxylase (BC) catalyzes the carboxylation of biotin on its carrier protein (BCCP) and then the CO(2) group is transferred by the transcarboxylase to acetyl-CoA to form malonyl-CoA. This Citrobacter koseri (strain ATCC BAA-895 / CDC 4225-83 / SGSC4696) protein is Acetyl-coenzyme A carboxylase carboxyl transferase subunit beta.